The chain runs to 79 residues: Dolichyl-diphosphooligosaccharide--protein glycosyltransferase subunit TMEM258 (79 aa).

2 helical membrane passes run proline 19–isoleucine 39 and phenylalanine 55–valine 75.

It belongs to the OST5 family. Component of the oligosaccharyltransferase (OST) complex.

It localises to the membrane. It participates in protein modification; protein glycosylation. Subunit of the oligosaccharyl transferase (OST) complex that catalyzes the initial transfer of a defined glycan (Glc(3)Man(9)GlcNAc(2) in eukaryotes) from the lipid carrier dolichol-pyrophosphate to an asparagine residue within an Asn-X-Ser/Thr consensus motif in nascent polypeptide chains, the first step in protein N-glycosylation. N-glycosylation occurs cotranslationally and the complex associates with the Sec61 complex at the channel-forming translocon complex that mediates protein translocation across the endoplasmic reticulum (ER). All subunits are required for a maximal enzyme activity. This Caenorhabditis elegans protein is Dolichyl-diphosphooligosaccharide--protein glycosyltransferase subunit TMEM258.